Reading from the N-terminus, the 913-residue chain is Collagen alpha-2(I) chain (913 aa).

The interval 1 to 913 (SGGFDFSFLP…FGYEGDFYRA (913 aa)) is disordered. 4 positions are modified to 4-hydroxyproline: Pro10, Pro13, Pro35, and Pro41. Low complexity-rich tracts occupy residues 28–67 (LMGP…ARGP), 125–154 (VGAP…SAGP), and 199–220 (PGAN…AGAP). Positions 254-263 (GESGGKGEPG) are enriched in gly residues. The segment covering 264 to 274 (SAGPQGPPGSS) has biased composition (low complexity). The segment covering 281–303 (GPNGGSTGPTGPPGLRGGPGSRG) has biased composition (gly residues). Over residues 316-332 (PAGARGASGPAGVRGPS) the composition is skewed to low complexity. A 4-hydroxyproline mark is found at Pro338 and Pro341. Low complexity-rich tracts occupy residues 367–386 (LPGI…RGEA) and 408–421 (PDGN…PGLQ). Positions 422–431 (GVQGGKGTTG) are enriched in gly residues. Low complexity-rich tracts occupy residues 459-476 (PGES…SRGP) and 488-498 (EPGVVGAPGTA). Residues 499 to 517 (GPAGSGGPGERGAAGIPGG) are compositionally biased toward gly residues. Composition is skewed to low complexity over residues 527-574 (RGEV…PRGS) and 581-601 (VGPA…QPGA). Residues 602 to 611 (KGERGTKGPK) are compositionally biased toward basic and acidic residues. Over residues 619–629 (PTGPVGSAGPA) the composition is skewed to low complexity. A compositionally biased stretch (gly residues) spans 639–648 (GSRGDGGPPG). Over residues 650–659 (TGFPGAAGRT) the composition is skewed to low complexity. Positions 696–705 (GETGAGGPPG) are enriched in gly residues. 2 stretches are compositionally biased toward low complexity: residues 713-740 (SGEP…LGLP) and 748-758 (LPGVAGAVGEP). Positions 759-776 (GPLGIGPPGARGPSGAGK) are enriched in gly residues. Over residues 782–797 (EPGPVGSVGPVGALGP) the composition is skewed to low complexity. Basic and acidic residues predominate over residues 807–818 (RGDKGEPGEKGP). Positions 883-895 (SGPPGPPGPPGPP) are enriched in pro residues.

Belongs to the fibrillar collagen family. In terms of assembly, trimers of one alpha 2(I) and two alpha 1(I) chains. Interacts (via C-terminus) with TMEM131 (via PapD-L domain); the interaction is direct and is involved in assembly and TRAPPIII ER-to-Golgi transport complex-dependent secretion of collagen. Prolines at the third position of the tripeptide repeating unit (G-X-Y) are hydroxylated in some or all of the chains. In terms of tissue distribution, expressed in bones.

It is found in the secreted. Its subcellular location is the extracellular space. The protein localises to the extracellular matrix. Type I collagen is a member of group I collagen (fibrillar forming collagen). The protein is Collagen alpha-2(I) chain of Parocnus serus (Greater Haitian ground sloth).